The chain runs to 140 residues: MFRTISRKNMSQKLSFLLLVFGLIWGLMLLHYTLQQPRRQSSVKLREQILDLSKRYVKALAEESRSTADVDSGASMAGYADLKRTIAVLLDDILQRLVKLESKVDYIVVNGSATNTTNGTNGNLVPVTTNKRTSVSGSVR.

Positions 1–35 are cleaved as a signal peptide; it reads MFRTISRKNMSQKLSFLLLVFGLIWGLMLLHYTLQ. A glycan (N-linked (GlcNAc...) asparagine) is linked at N110. The span at 118–130 shows a compositional bias: low complexity; the sequence is NGTNGNLVPVTTN. Residues 118 to 140 are disordered; it reads NGTNGNLVPVTTNKRTSVSGSVR. A compositionally biased stretch (polar residues) spans 131–140; the sequence is KRTSVSGSVR.

It is found in the secreted. This is Coiled-coil domain-containing protein 126 (Ccdc126) from Mus musculus (Mouse).